The sequence spans 120 residues: Large ribosomal subunit protein uL18 (120 aa).

The protein belongs to the universal ribosomal protein uL18 family. Part of the 50S ribosomal subunit; part of the 5S rRNA/L5/L18/L25 subcomplex. Contacts the 5S and 23S rRNAs.

This is one of the proteins that bind and probably mediate the attachment of the 5S RNA into the large ribosomal subunit, where it forms part of the central protuberance. In Bartonella bacilliformis (strain ATCC 35685 / KC583 / Herrer 020/F12,63), this protein is Large ribosomal subunit protein uL18.